A 423-amino-acid chain; its full sequence is Protein CLP1 homolog (423 aa).

ATP-binding positions include Glu-16, Lys-57, and Asp-119–Thr-124.

This sequence belongs to the Clp1 family. Clp1 subfamily.

Its subcellular location is the nucleus. In terms of biological role, required for endonucleolytic cleavage during polyadenylation-dependent pre-mRNA 3'-end formation. The protein is Protein CLP1 homolog (cbc) of Drosophila simulans (Fruit fly).